A 154-amino-acid polypeptide reads, in one-letter code: Aspartate carbamoyltransferase regulatory chain (154 aa).

C109, C114, C138, and C141 together coordinate Zn(2+).

This sequence belongs to the PyrI family. As to quaternary structure, contains catalytic and regulatory chains. It depends on Zn(2+) as a cofactor.

Its function is as follows. Involved in allosteric regulation of aspartate carbamoyltransferase. This chain is Aspartate carbamoyltransferase regulatory chain, found in Serratia proteamaculans (strain 568).